A 447-amino-acid chain; its full sequence is N-succinylarginine dihydrolase (447 aa).

Substrate-binding positions include 19 to 28 (AGLSFGNEAS), Asn110, and 137 to 138 (HR). Residue Glu174 is part of the active site. Arg213 provides a ligand contact to substrate. Residue His249 is part of the active site. Substrate contacts are provided by Asp251 and Asn364. The active-site Nucleophile is the Cys370.

This sequence belongs to the succinylarginine dihydrolase family. As to quaternary structure, homodimer.

The enzyme catalyses N(2)-succinyl-L-arginine + 2 H2O + 2 H(+) = N(2)-succinyl-L-ornithine + 2 NH4(+) + CO2. It functions in the pathway amino-acid degradation; L-arginine degradation via AST pathway; L-glutamate and succinate from L-arginine: step 2/5. Its function is as follows. Catalyzes the hydrolysis of N(2)-succinylarginine into N(2)-succinylornithine, ammonia and CO(2). The polypeptide is N-succinylarginine dihydrolase (Yersinia pestis bv. Antiqua (strain Antiqua)).